The following is a 296-amino-acid chain: Phosphatidylserine decarboxylase proenzyme (296 aa).

Catalysis depends on charge relay system; for autoendoproteolytic cleavage activity residues Asp-92, His-149, and Ser-251. The active-site Schiff-base intermediate with substrate; via pyruvic acid; for decarboxylase activity is Ser-251. Pyruvic acid (Ser); by autocatalysis is present on Ser-251.

It belongs to the phosphatidylserine decarboxylase family. PSD-B subfamily. Prokaryotic type I sub-subfamily. Heterodimer of a large membrane-associated beta subunit and a small pyruvoyl-containing alpha subunit. Pyruvate is required as a cofactor. In terms of processing, is synthesized initially as an inactive proenzyme. Formation of the active enzyme involves a self-maturation process in which the active site pyruvoyl group is generated from an internal serine residue via an autocatalytic post-translational modification. Two non-identical subunits are generated from the proenzyme in this reaction, and the pyruvate is formed at the N-terminus of the alpha chain, which is derived from the carboxyl end of the proenzyme. The autoendoproteolytic cleavage occurs by a canonical serine protease mechanism, in which the side chain hydroxyl group of the serine supplies its oxygen atom to form the C-terminus of the beta chain, while the remainder of the serine residue undergoes an oxidative deamination to produce ammonia and the pyruvoyl prosthetic group on the alpha chain. During this reaction, the Ser that is part of the protease active site of the proenzyme becomes the pyruvoyl prosthetic group, which constitutes an essential element of the active site of the mature decarboxylase.

The protein resides in the cell membrane. The enzyme catalyses a 1,2-diacyl-sn-glycero-3-phospho-L-serine + H(+) = a 1,2-diacyl-sn-glycero-3-phosphoethanolamine + CO2. The protein operates within phospholipid metabolism; phosphatidylethanolamine biosynthesis; phosphatidylethanolamine from CDP-diacylglycerol: step 2/2. Catalyzes the formation of phosphatidylethanolamine (PtdEtn) from phosphatidylserine (PtdSer). This Hahella chejuensis (strain KCTC 2396) protein is Phosphatidylserine decarboxylase proenzyme.